The following is a 165-amino-acid chain: Cyclic pyranopterin monophosphate synthase (165 aa).

Substrate contacts are provided by residues 76-78 and 114-115; these read LCH and ME. D129 is an active-site residue.

The protein belongs to the MoaC family. In terms of assembly, homohexamer; trimer of dimers.

It carries out the reaction (8S)-3',8-cyclo-7,8-dihydroguanosine 5'-triphosphate = cyclic pyranopterin phosphate + diphosphate. It functions in the pathway cofactor biosynthesis; molybdopterin biosynthesis. Its function is as follows. Catalyzes the conversion of (8S)-3',8-cyclo-7,8-dihydroguanosine 5'-triphosphate to cyclic pyranopterin monophosphate (cPMP). This is Cyclic pyranopterin monophosphate synthase from Brucella abortus (strain 2308).